Reading from the N-terminus, the 169-residue chain is MAGPAPGRRLVALALIVALAVGLPTAGAGQAPRPAERGPPVRLFTEEELARYGGEEEDQPIYMAVKGVVFDVTSGKEFYGRGAPYNALTGKDSTRGVAKMSLDPADLTHDTTGLTAEELESLDDVFTRVYKAKYPIVGYTARRILNEDGSPNLDFKPEDQPHFDIKDEF.

The signal sequence occupies residues 1-28 (MAGPAPGRRLVALALIVALAVGLPTAGA). The Cytochrome b5 heme-binding domain maps to 41 to 126 (VRLFTEEELA…EELESLDDVF (86 aa)). Position 133 is an N6-acetyllysine (K133). Positions 148–169 (DGSPNLDFKPEDQPHFDIKDEF) are disordered. Positions 155 to 169 (FKPEDQPHFDIKDEF) are enriched in basic and acidic residues.

The protein belongs to the cytochrome b5 family. MAPR subfamily. Interacts with PINK1 and PARK7.

Its subcellular location is the secreted. The protein resides in the extracellular space. The protein localises to the mitochondrion. It localises to the endoplasmic reticulum. Acts as a neurotrophic factor in postnatal mature neurons enhancing neuronal survival. Promotes cell proliferation and neurogenesis in undifferentiated neural progenitor cells at the embryonic stage and inhibits differentiation of astrocytes. Its neurotrophic activity is exerted via MAPK1/ERK2, MAPK3/ERK1 and AKT1/AKT pathways. Neurotrophic activity is enhanced by binding to heme. Also acts as an anorexigenic neurotrophic factor that contributes to energy balance. This chain is Neudesin (NENF), found in Bos taurus (Bovine).